The chain runs to 267 residues: MAEPLTVSPELTANYAYFFDLDGTLAEIKPHPDQVVVPHKILQLLDRLAAHNAGALALISGRSMTELDALAKPFRFPLAGVHGAERRDINGKTHIVRLPEAVVREVEALLRSTLVALPGTELESKGMAFALHYRQAPEHEAALLALAQHVTQHWPQLALQPGKCVVEIKPKGTNKGEAIAAFMQEAPFAGRIPVFVGDDLTDEAGFGVVNHAGGISVKVGVGATQAAWRLESVPDVWRWLEQINYPQQEQQVMNNRRDGYESFSRSI.

The active-site Nucleophile is Asp20. The Mg(2+) site is built by Asp20, Asp22, and Asp198. 20 to 22 (DLD) is a binding site for substrate.

This sequence belongs to the trehalose phosphatase family. Mg(2+) serves as cofactor.

It catalyses the reaction alpha,alpha-trehalose 6-phosphate + H2O = alpha,alpha-trehalose + phosphate. It participates in glycan biosynthesis; trehalose biosynthesis. Removes the phosphate from trehalose 6-phosphate to produce free trehalose. The polypeptide is Trehalose-phosphate phosphatase (otsB) (Salmonella typhimurium (strain LT2 / SGSC1412 / ATCC 700720)).